A 346-amino-acid polypeptide reads, in one-letter code: Probable dolichyl-diphosphooligosaccharide--protein glycosyltransferase subunit 3B (346 aa).

The signal sequence occupies residues 1 to 22 (MALKSKLVSLLFLIATLSSTFA). Over 23 to 189 (ASFSDSDSDS…KVGPIQRPPL (167 aa)) the chain is Lumenal. The N-linked (GlcNAc...) asparagine glycan is linked to Asn108. Residues 190–210 (LSKPQIGIIVALIVIATPFII) form a helical membrane-spanning segment. At 211 to 225 (KRVLKGETILHDTRL) the chain is on the cytoplasmic side. Residues 226 to 246 (WLSGAIFIYFFSVAGTMHNII) form a helical membrane-spanning segment. Over 247–277 (RKMPMFLQDRNDPNKLVFFYQGSGMQLGAEG) the chain is Lumenal. The chain crosses the membrane as a helical span at residues 278 to 298 (FAVGFLYTVVGLLLAFVTNVL). Residues 299-308 (VRVKNITAQR) lie on the Cytoplasmic side of the membrane. A helical transmembrane segment spans residues 309-329 (LIMLLALFISFWAVKKVVYLD). At 330-346 (NWKTGYGIHPYWPSSWR) the chain is on the lumenal side.

The protein belongs to the OST3/OST6 family. In terms of assembly, component of the oligosaccharyltransferase (OST) complex.

The protein resides in the endoplasmic reticulum membrane. In terms of biological role, subunit of the oligosaccharyl transferase (OST) complex that catalyzes the initial transfer of a defined glycan (Glc(3)Man(9)GlcNAc(2) in eukaryotes) from the lipid carrier dolichol-pyrophosphate to an asparagine residue within an Asn-X-Ser/Thr consensus motif in nascent polypeptide chains, the first step in protein N-glycosylation. N-glycosylation occurs cotranslationally and the complex associates with the Sec61 complex at the channel-forming translocon complex that mediates protein translocation across the endoplasmic reticulum (ER). All subunits are required for a maximal enzyme activity. In Arabidopsis thaliana (Mouse-ear cress), this protein is Probable dolichyl-diphosphooligosaccharide--protein glycosyltransferase subunit 3B (OST3B).